A 565-amino-acid polypeptide reads, in one-letter code: Thiol:disulfide interchange protein DsbD (565 aa).

The first 19 residues, 1–19, serve as a signal peptide directing secretion; sequence MAQRIFTLILLLCSTSVFA. Disulfide bonds link C122–C128 and C182–C304. The next 7 helical transmembrane spans lie at 163–183, 208–228, 243–263, 296–316, 323–343, 357–377, and 384–404; these read LPFS…TPCV, LLTF…GLVV, YVLI…FGLF, IAGL…LLYI, WLGG…LMLI, WMEQ…VFLL, and VWGL…AFIT. In terms of domain architecture, Thioredoxin spans 434–565; sequence WAFGATHTAQ…FSAHLRDRQP (132 aa). An intrachain disulfide couples C480 to C483.

The protein belongs to the thioredoxin family. DsbD subfamily.

Its subcellular location is the cell inner membrane. It catalyses the reaction [protein]-dithiol + NAD(+) = [protein]-disulfide + NADH + H(+). It carries out the reaction [protein]-dithiol + NADP(+) = [protein]-disulfide + NADPH + H(+). In terms of biological role, required to facilitate the formation of correct disulfide bonds in some periplasmic proteins and for the assembly of the periplasmic c-type cytochromes. Acts by transferring electrons from cytoplasmic thioredoxin to the periplasm. This transfer involves a cascade of disulfide bond formation and reduction steps. The sequence is that of Thiol:disulfide interchange protein DsbD from Shigella boydii serotype 4 (strain Sb227).